A 154-amino-acid chain; its full sequence is dCTP deaminase (154 aa).

Residues 79 to 84 (RSSLAR), Asp-95, Gln-124, and Tyr-138 contribute to the dCTP site.

The protein belongs to the dCTP deaminase family. As to quaternary structure, homotrimer.

The catalysed reaction is dCTP + H2O + H(+) = dUTP + NH4(+). It participates in pyrimidine metabolism; dUMP biosynthesis; dUMP from dCTP (dUTP route): step 1/2. Catalyzes the deamination of dCTP to dUTP. This Pyrococcus abyssi (strain GE5 / Orsay) protein is dCTP deaminase.